The primary structure comprises 246 residues: Ribonuclease 3 (246 aa).

The RNase III domain occupies 16-146; sequence ATELEAGIGY…LLAAVYLDGG (131 aa). A Mg(2+)-binding site is contributed by E59. D63 is a catalytic residue. Residues N132 and E135 each coordinate Mg(2+). E135 is a catalytic residue. Residues 173 to 242 enclose the DRBM domain; sequence DFKTEFQEMV…ARQVLARFAA (70 aa).

The protein belongs to the ribonuclease III family. As to quaternary structure, homodimer. Mg(2+) is required as a cofactor.

Its subcellular location is the cytoplasm. It catalyses the reaction Endonucleolytic cleavage to 5'-phosphomonoester.. Its function is as follows. Digests double-stranded RNA. Involved in the processing of primary rRNA transcript to yield the immediate precursors to the large and small rRNAs (23S and 16S). Processes some mRNAs, and tRNAs when they are encoded in the rRNA operon. Processes pre-crRNA and tracrRNA of type II CRISPR loci if present in the organism. This Geobacter metallireducens (strain ATCC 53774 / DSM 7210 / GS-15) protein is Ribonuclease 3.